Consider the following 417-residue polypeptide: Gamma-glutamyl phosphate reductase (417 aa).

It belongs to the gamma-glutamyl phosphate reductase family.

The protein localises to the cytoplasm. The enzyme catalyses L-glutamate 5-semialdehyde + phosphate + NADP(+) = L-glutamyl 5-phosphate + NADPH + H(+). It functions in the pathway amino-acid biosynthesis; L-proline biosynthesis; L-glutamate 5-semialdehyde from L-glutamate: step 2/2. Catalyzes the NADPH-dependent reduction of L-glutamate 5-phosphate into L-glutamate 5-semialdehyde and phosphate. The product spontaneously undergoes cyclization to form 1-pyrroline-5-carboxylate. This Hydrogenovibrio crunogenus (strain DSM 25203 / XCL-2) (Thiomicrospira crunogena) protein is Gamma-glutamyl phosphate reductase.